Here is a 156-residue protein sequence, read N- to C-terminus: Small ribosomal subunit protein uS7 (156 aa).

It belongs to the universal ribosomal protein uS7 family. As to quaternary structure, part of the 30S ribosomal subunit. Contacts proteins S9 and S11.

One of the primary rRNA binding proteins, it binds directly to 16S rRNA where it nucleates assembly of the head domain of the 30S subunit. Is located at the subunit interface close to the decoding center, probably blocks exit of the E-site tRNA. This Mycolicibacterium smegmatis (strain ATCC 700084 / mc(2)155) (Mycobacterium smegmatis) protein is Small ribosomal subunit protein uS7.